The sequence spans 577 residues: MIKQPFLLTKFTPFSSKSKHTLFTFHCNFSIKMASLTARTTPTVQNVPGLTPEEMERVCEQTFQRYESGGLGKRKGKGVAIVWFRNDLRVLDNEALLRAWVSSEAILPVYCVDPRLFGTTHYFGMPKTGALRAQFIIECLNDLKRNLVKRGLDLLIQHGKPEDIVPSLAKAYKAHTVYAHKETCSEEVKVEKMVTRNLQKLVSPSSGGIGNDPGSGNTTKLELVWGSTMYHIDDLPFDCESLPDVYTQFRKSVEYKSKVRNCTKLPTSFGPPPEVGDWGHVPQVSELGLQQEKVSKGMNFVGGESAALGRVHDYFWKKDLLKVYKETRNGMLGADYSTKFSPWLASGSLSPRFIYEEVKRYEKERLSNDSTYWVLFELIWRDYFRFLSIKLANLLFQAGGPQKVNINWSQDQTMFDAWRRGQTGYPLIDANMKELAATGYMSNRGRQIVCSFLVRDMGIDWRMGAEWFETCLLDYDPCSNYGNWTYGAGVGNDPREDRYFSIPKQAQNYDPEGEFVAYWLPELRALPREKRHSPGMMYLNPIVALKHGYTKKTGDSKTAFSSRRGRPEDNRRKRHGY.

A chloroplast and mitochondrion-targeting transit peptide spans Met1–Glu53. Positions Gly78–Thr219 constitute a Photolyase/cryptochrome alpha/beta domain. The interval Thr550–Tyr577 is disordered.

The protein belongs to the DNA photolyase class-1 family. Requires FAD as cofactor. (6R)-5,10-methylene-5,6,7,8-tetrahydrofolate is required as a cofactor. Expressed in the endosperm and embryo 96 hours after seed imbibition. In the embryo, detected in the root meristem, the root cap, the shoot apical meristem and the epidermis of cotyledons. In adult plants, detcted in roots, the whole leaf lamina, the stem and in glandular trichomes.

The protein localises to the plastid. Its subcellular location is the chloroplast. It is found in the mitochondrion. Functionally, may have a photoreceptor function and might bind ss- and ds-DNA in a sequence non-specific manner. Lacks photolyase activity. Has a potential role in detecting the dawn and dusk transitions and, consequently, in circadian input pathways. This is Cryptochrome DASH, chloroplastic/mitochondrial from Solanum lycopersicum (Tomato).